Consider the following 732-residue polypeptide: Engulfment and cell motility protein 2 (732 aa).

Residue Y48 is modified to Phosphotyrosine. In terms of domain architecture, ELMO spans 323–497; the sequence is AQRDIIFELR…VVREQITRAL (175 aa). S515 carries the post-translational modification Phosphoserine. Residues 565–686 form the PH domain; sequence SSFRKIGNRR…LLGKDMSSEL (122 aa). Residues 712-719 carry the SH3-binding motif; it reads PEAPPPVP. Phosphotyrosine is present on Y729.

In terms of assembly, interacts directly with the SH3-domain of DOCK1 via its SH3-binding site. Probably forms a heterotrimeric complex with DOCK1 and RAC1. Interacts with ARHGEF16, DOCK4 and EPHA2; mediates activation of RAC1 by EPHA2. Interacts with ADGRB3. Interacts with AUTS2; the interaction is direct.

The protein localises to the cytoplasm. The protein resides in the cytosol. It localises to the membrane. Involved in cytoskeletal rearrangements required for phagocytosis of apoptotic cells and cell motility. Acts in association with DOCK1 and CRK. Was initially proposed to be required in complex with DOCK1 to activate Rac Rho small GTPases. May enhance the guanine nucleotide exchange factor (GEF) activity of DOCK1. The polypeptide is Engulfment and cell motility protein 2 (Elmo2) (Mus musculus (Mouse)).